Consider the following 301-residue polypeptide: Acetylglutamate kinase (301 aa).

Substrate is bound by residues 71–72 (GG), arginine 93, and asparagine 198.

The protein belongs to the acetylglutamate kinase family. ArgB subfamily.

The protein resides in the cytoplasm. It catalyses the reaction N-acetyl-L-glutamate + ATP = N-acetyl-L-glutamyl 5-phosphate + ADP. The protein operates within amino-acid biosynthesis; L-arginine biosynthesis; N(2)-acetyl-L-ornithine from L-glutamate: step 2/4. Its function is as follows. Catalyzes the ATP-dependent phosphorylation of N-acetyl-L-glutamate. In Zymomonas mobilis subsp. mobilis (strain ATCC 31821 / ZM4 / CP4), this protein is Acetylglutamate kinase.